A 426-amino-acid polypeptide reads, in one-letter code: Glutamate-1-semialdehyde 2,1-aminomutase (426 aa).

Lysine 265 carries the post-translational modification N6-(pyridoxal phosphate)lysine.

It belongs to the class-III pyridoxal-phosphate-dependent aminotransferase family. HemL subfamily. Homodimer. Pyridoxal 5'-phosphate is required as a cofactor.

The protein localises to the cytoplasm. The catalysed reaction is (S)-4-amino-5-oxopentanoate = 5-aminolevulinate. The protein operates within porphyrin-containing compound metabolism; protoporphyrin-IX biosynthesis; 5-aminolevulinate from L-glutamyl-tRNA(Glu): step 2/2. The protein is Glutamate-1-semialdehyde 2,1-aminomutase of Escherichia coli (strain K12 / DH10B).